Reading from the N-terminus, the 455-residue chain is Bifunctional protein GlmU (455 aa).

The interval 1–226 (MSLDIVILAA…PMEVQGANDR (226 aa)) is pyrophosphorylase. UDP-N-acetyl-alpha-D-glucosamine-binding positions include 8 to 11 (LAAG), lysine 22, glutamine 73, 78 to 79 (GT), 99 to 101 (YGD), glycine 136, glutamate 151, asparagine 166, and asparagine 224. Aspartate 101 lines the Mg(2+) pocket. Asparagine 224 is a Mg(2+) binding site. The segment at 227–247 (RQLSELERHYQLREGRRLMAQ) is linker. Residues 248 to 455 (GVTLRDPARF…WKRPEKIKKS (208 aa)) are N-acetyltransferase. UDP-N-acetyl-alpha-D-glucosamine-binding residues include arginine 330 and lysine 348. Histidine 360 acts as the Proton acceptor in catalysis. Residues tyrosine 363 and asparagine 374 each coordinate UDP-N-acetyl-alpha-D-glucosamine. Acetyl-CoA contacts are provided by residues alanine 377, 383 to 384 (NY), serine 402, alanine 420, and arginine 437.

It in the N-terminal section; belongs to the N-acetylglucosamine-1-phosphate uridyltransferase family. The protein in the C-terminal section; belongs to the transferase hexapeptide repeat family. Homotrimer. Requires Mg(2+) as cofactor.

It localises to the cytoplasm. It carries out the reaction alpha-D-glucosamine 1-phosphate + acetyl-CoA = N-acetyl-alpha-D-glucosamine 1-phosphate + CoA + H(+). It catalyses the reaction N-acetyl-alpha-D-glucosamine 1-phosphate + UTP + H(+) = UDP-N-acetyl-alpha-D-glucosamine + diphosphate. It functions in the pathway nucleotide-sugar biosynthesis; UDP-N-acetyl-alpha-D-glucosamine biosynthesis; N-acetyl-alpha-D-glucosamine 1-phosphate from alpha-D-glucosamine 6-phosphate (route II): step 2/2. Its pathway is nucleotide-sugar biosynthesis; UDP-N-acetyl-alpha-D-glucosamine biosynthesis; UDP-N-acetyl-alpha-D-glucosamine from N-acetyl-alpha-D-glucosamine 1-phosphate: step 1/1. It participates in bacterial outer membrane biogenesis; LPS lipid A biosynthesis. In terms of biological role, catalyzes the last two sequential reactions in the de novo biosynthetic pathway for UDP-N-acetylglucosamine (UDP-GlcNAc). The C-terminal domain catalyzes the transfer of acetyl group from acetyl coenzyme A to glucosamine-1-phosphate (GlcN-1-P) to produce N-acetylglucosamine-1-phosphate (GlcNAc-1-P), which is converted into UDP-GlcNAc by the transfer of uridine 5-monophosphate (from uridine 5-triphosphate), a reaction catalyzed by the N-terminal domain. This Pseudomonas entomophila (strain L48) protein is Bifunctional protein GlmU.